A 319-amino-acid polypeptide reads, in one-letter code: MARKKITLVGAGNIGGTLAHLALIKQLGDVVLFDIAQGMPNGKALDLLQTCPIEGVDFKVRGTNDYKDLENSDVVIVTAGVPRKPGMSRDDLLGINIKVMQTVGEGIKHNCPNAFVICITNPLDIMVNMLQKFSGVPDNKIVGMAGVLDSARFRTFLADELNVSVQQVQAYVMGGHGDTMVPLTKMSNVAGVSLEQLVKEGKLKQERLDAIVSRTRSGGGEIVALLKTGSAYYAPAAAGIQMAESFLKDKKMILPCAAKVKAGMYGLDEDLFVGVPTEISANGVRPIEVEISDKEREQLQVSINAVKDLNKVAAEILAK.

Residues 10 to 15 and Asp34 contribute to the NAD(+) site; that span reads GAGNIG. The substrate site is built by Arg83 and Arg89. Residues Asn96 and 119–121 each bind NAD(+); that span reads ITN. Asn121 and Arg152 together coordinate substrate. The active-site Proton acceptor is His176.

Belongs to the LDH/MDH superfamily. MDH type 3 family.

The catalysed reaction is (S)-malate + NAD(+) = oxaloacetate + NADH + H(+). Catalyzes the reversible oxidation of malate to oxaloacetate. This Francisella tularensis subsp. mediasiatica (strain FSC147) protein is Malate dehydrogenase.